Reading from the N-terminus, the 243-residue chain is MGKNKQPRGQQRQGGPPAADAAGPDDMEPKKGTGAPKECGEEEPRTCCGCRFPLLLALLQLALGIAVTVVGFLMASISSSLLVRDTPFWAGIIVCLVAYLGLFMLCVSYQVDERTCIQFSMKLLYFLLSALGLTVCVLAVAFAAHHYSQLTQFTCETTLDSCQCKLPSSEPLSRTFVYRDVTDCTSVTGTFKLFLLIQMILNLVCGLVCLLACFVMWKHRYQVFYVGVRICSLTASEGPQQKI.

Residues 1 to 43 (MGKNKQPRGQQRQGGPPAADAAGPDDMEPKKGTGAPKECGEEE) are disordered. The Cytoplasmic segment spans residues 1-53 (MGKNKQPRGQQRQGGPPAADAAGPDDMEPKKGTGAPKECGEEEPRTCCGCRFP). Positions 7-24 (PRGQQRQGGPPAADAAGP) are enriched in low complexity. Residues 54 to 74 (LLLALLQLALGIAVTVVGFLM) form a helical membrane-spanning segment. The Extracellular portion of the chain corresponds to 75 to 86 (ASISSSLLVRDT). The chain crosses the membrane as a helical span at residues 87 to 107 (PFWAGIIVCLVAYLGLFMLCV). The Cytoplasmic portion of the chain corresponds to 108 to 122 (SYQVDERTCIQFSMK). The helical transmembrane segment at 123–143 (LLYFLLSALGLTVCVLAVAFA) threads the bilayer. Residues 144–193 (AHHYSQLTQFTCETTLDSCQCKLPSSEPLSRTFVYRDVTDCTSVTGTFKL) lie on the Extracellular side of the membrane. Residues 194 to 214 (FLLIQMILNLVCGLVCLLACF) form a helical membrane-spanning segment. The Cytoplasmic portion of the chain corresponds to 215–243 (VMWKHRYQVFYVGVRICSLTASEGPQQKI).

Isoform 1 is expressed exclusively in heart and skeletal muscle. Isoform 2 is expressed in heart, skeletal muscle, thymus, prostate, testis, ovary, small intestine, colon and spleen.

The protein localises to the cell membrane. Its subcellular location is the sarcolemma. The protein resides in the postsynaptic cell membrane. Functionally, component of the dystrophin-glycoprotein complex (DGC), a complex that spans the muscle plasma membrane and forms a link between the F-actin cytoskeleton and the extracellular matrix. Preferentially associates with the sarcoglycan subcomplex of the DGC. The polypeptide is Sarcospan (SSPN) (Homo sapiens (Human)).